Here is a 420-residue protein sequence, read N- to C-terminus: MNVTPWEVEGVIDYSKLIEEFGMQPFSEVLPEIDNPHILMRRGAIFGHRDYWRIIEAMQKKEPWAVMSGFMPSGLPHFGHKMTMDEIVWHQSAGGKAFVAIADMEAHSVRGLSWEKTRELGMLYIKSIIALGLREDAVIYFQSKSSHVKDLAFELSAEVNFSELRAIYGFNSDTSLAKMFVTAIQAADILHPQLSDFGGPKPVVVPVGADQDPHMRLTRDLAARISIFSFEPVEGGVRVRSRKGAEYLSSLRDLEFDKKIYEEHMDIFGEAEEIERAVRKIEVEIGGFAFIPPSSTYHRFTTGLTGGKMSSSKPESYISLLDPPEEGAKKVMKAFTGGRATAEEQRRLGGEPDRCVVFELYSFHLIDSDEELNQIEAECREGRLLCGKCKKMAAELVKSFLKEHQEKMEAVDLSNYTIIG.

Residues 72-80 (PSGLPHFGH) carry the 'HIGH' region motif. The 'KMSKS' region signature appears at 308-312 (KMSSS).

It belongs to the class-I aminoacyl-tRNA synthetase family.

The protein resides in the cytoplasm. The catalysed reaction is tRNA(Trp) + L-tryptophan + ATP = L-tryptophyl-tRNA(Trp) + AMP + diphosphate + H(+). This chain is Tryptophan--tRNA ligase, found in Archaeoglobus fulgidus (strain ATCC 49558 / DSM 4304 / JCM 9628 / NBRC 100126 / VC-16).